The sequence spans 83 residues: Small ribosomal subunit protein bS16 (83 aa).

The protein belongs to the bacterial ribosomal protein bS16 family.

This chain is Small ribosomal subunit protein bS16, found in Pseudomonas putida (strain ATCC 700007 / DSM 6899 / JCM 31910 / BCRC 17059 / LMG 24140 / F1).